The sequence spans 145 residues: D-aminoacyl-tRNA deacylase (145 aa).

Positions Gly-137–Pro-138 match the Gly-cisPro motif, important for rejection of L-amino acids motif.

This sequence belongs to the DTD family. Homodimer.

It localises to the cytoplasm. It carries out the reaction glycyl-tRNA(Ala) + H2O = tRNA(Ala) + glycine + H(+). It catalyses the reaction a D-aminoacyl-tRNA + H2O = a tRNA + a D-alpha-amino acid + H(+). In terms of biological role, an aminoacyl-tRNA editing enzyme that deacylates mischarged D-aminoacyl-tRNAs. Also deacylates mischarged glycyl-tRNA(Ala), protecting cells against glycine mischarging by AlaRS. Acts via tRNA-based rather than protein-based catalysis; rejects L-amino acids rather than detecting D-amino acids in the active site. By recycling D-aminoacyl-tRNA to D-amino acids and free tRNA molecules, this enzyme counteracts the toxicity associated with the formation of D-aminoacyl-tRNA entities in vivo and helps enforce protein L-homochirality. This chain is D-aminoacyl-tRNA deacylase, found in Brevibacillus brevis (strain 47 / JCM 6285 / NBRC 100599).